We begin with the raw amino-acid sequence, 309 residues long: ADP-L-glycero-D-manno-heptose-6-epimerase (309 aa).

NADP(+) contacts are provided by residues 10–11 (FI), 31–32 (DN), Lys38, Lys53, 75–79 (LGACS), and Asn92. Tyr140 (proton acceptor) is an active-site residue. Residue Lys144 coordinates NADP(+). Asn169 serves as a coordination point for substrate. NADP(+) is bound by residues Val170 and Lys178. Lys178 acts as the Proton acceptor in catalysis. Substrate contacts are provided by residues Ser180, His187, 201–204 (FLGS), Arg209, and Tyr272.

This sequence belongs to the NAD(P)-dependent epimerase/dehydratase family. HldD subfamily. Homopentamer. Requires NADP(+) as cofactor.

The catalysed reaction is ADP-D-glycero-beta-D-manno-heptose = ADP-L-glycero-beta-D-manno-heptose. The protein operates within nucleotide-sugar biosynthesis; ADP-L-glycero-beta-D-manno-heptose biosynthesis; ADP-L-glycero-beta-D-manno-heptose from D-glycero-beta-D-manno-heptose 7-phosphate: step 4/4. In terms of biological role, catalyzes the interconversion between ADP-D-glycero-beta-D-manno-heptose and ADP-L-glycero-beta-D-manno-heptose via an epimerization at carbon 6 of the heptose. The polypeptide is ADP-L-glycero-D-manno-heptose-6-epimerase (Hamiltonella defensa subsp. Acyrthosiphon pisum (strain 5AT)).